A 202-amino-acid chain; its full sequence is Ras-related protein Rab-18 (202 aa).

Positions 20, 23, 24, 25, 26, 37, 38, 43, 69, 126, 128, and 155 each coordinate GTP. Residues 40–48 (QAATIGVDF) carry the Effector region motif. Residues 183 to 202 (RPTFRLGQPTDTSSGNLCGC) are disordered. A compositionally biased stretch (polar residues) spans 191–202 (PTDTSSGNLCGC). 2 S-geranylgeranyl cysteine lipidation sites follow: C200 and C202. C202 bears the Cysteine methyl ester mark.

Belongs to the small GTPase superfamily. Rab family.

It catalyses the reaction GTP + H2O = GDP + phosphate + H(+). In terms of biological role, the small GTPases Rab are key regulators of intracellular membrane trafficking, from the formation of transport vesicles to their fusion with membranes. Rabs cycle between an inactive GDP-bound form and an active GTP-bound form that is able to recruit to membranes different sets of downstream effectors directly responsible for vesicle formation, movement, tethering and fusion. Plays a role in apical endocytosis/recycling. May be implicated in transport between the plasma membrane and early endosomes. The polypeptide is Ras-related protein Rab-18 (rab-18) (Caenorhabditis briggsae).